The sequence spans 210 residues: Outer-membrane lipoprotein carrier protein (210 aa).

The signal sequence occupies residues 1 to 23 (MKKRIQKTILTVLFSSLSSIAFA).

Belongs to the LolA family. Monomer.

The protein localises to the periplasm. Participates in the translocation of lipoproteins from the inner membrane to the outer membrane. Only forms a complex with a lipoprotein if the residue after the N-terminal Cys is not an aspartate (The Asp acts as a targeting signal to indicate that the lipoprotein should stay in the inner membrane). The chain is Outer-membrane lipoprotein carrier protein from Haemophilus ducreyi (strain 35000HP / ATCC 700724).